The primary structure comprises 326 residues: Glyoxylate/hydroxypyruvate reductase B (326 aa).

Catalysis depends on residues Arg237 and Glu266. Catalysis depends on His285, which acts as the Proton donor.

Belongs to the D-isomer specific 2-hydroxyacid dehydrogenase family. GhrB subfamily. In terms of assembly, homodimer.

It localises to the cytoplasm. It carries out the reaction glycolate + NADP(+) = glyoxylate + NADPH + H(+). The enzyme catalyses (R)-glycerate + NAD(+) = 3-hydroxypyruvate + NADH + H(+). The catalysed reaction is (R)-glycerate + NADP(+) = 3-hydroxypyruvate + NADPH + H(+). Its function is as follows. Catalyzes the NADPH-dependent reduction of glyoxylate and hydroxypyruvate into glycolate and glycerate, respectively. In Yersinia pestis bv. Antiqua (strain Nepal516), this protein is Glyoxylate/hydroxypyruvate reductase B.